A 360-amino-acid polypeptide reads, in one-letter code: Phosphoserine aminotransferase (360 aa).

Arg-42 contributes to the L-glutamate binding site. Pyridoxal 5'-phosphate contacts are provided by Trp-102, Thr-152, Asp-171, and Gln-194. Lys-195 carries the post-translational modification N6-(pyridoxal phosphate)lysine. 237-238 (NT) contacts pyridoxal 5'-phosphate.

The protein belongs to the class-V pyridoxal-phosphate-dependent aminotransferase family. SerC subfamily. In terms of assembly, homodimer. It depends on pyridoxal 5'-phosphate as a cofactor.

The protein resides in the cytoplasm. The enzyme catalyses O-phospho-L-serine + 2-oxoglutarate = 3-phosphooxypyruvate + L-glutamate. The catalysed reaction is 4-(phosphooxy)-L-threonine + 2-oxoglutarate = (R)-3-hydroxy-2-oxo-4-phosphooxybutanoate + L-glutamate. The protein operates within amino-acid biosynthesis; L-serine biosynthesis; L-serine from 3-phospho-D-glycerate: step 2/3. Its pathway is cofactor biosynthesis; pyridoxine 5'-phosphate biosynthesis; pyridoxine 5'-phosphate from D-erythrose 4-phosphate: step 3/5. Catalyzes the reversible conversion of 3-phosphohydroxypyruvate to phosphoserine and of 3-hydroxy-2-oxo-4-phosphonooxybutanoate to phosphohydroxythreonine. The chain is Phosphoserine aminotransferase from Coxiella burnetii (strain CbuK_Q154) (Coxiella burnetii (strain Q154)).